A 312-amino-acid chain; its full sequence is Homeobox-leucine zipper protein ATHB-5 (312 aa).

The interval 1 to 33 is disordered; it reads MKRSRGSSDSLSGFLPIRHSTTDKQISPRPTTT. A compositionally biased stretch (polar residues) spans 23–33; the sequence is DKQISPRPTTT. The segment at residues 69–128 is a DNA-binding region (homeobox); the sequence is AAEKKRRLGVEQVKALEKNFEIDNKLEPERKVKLAQELGLQPRQVAIWFQNRRARWKTKQ. Residues 129–164 form a leucine-zipper region; the sequence is LERDYGVLKSNFDALKRNRDSLQRDNDSLLGQIKEL.

This sequence belongs to the HD-ZIP homeobox family. Class I subfamily. Interacts with DNA as homodimer. In terms of tissue distribution, widely expressed.

Its subcellular location is the nucleus. Functionally, probable transcription factor that acts as a positive regulator of ABA-responsiveness, mediating the inhibitory effect of ABA on growth during seedling establishment. Binds to the DNA sequence 5'-CAATNATTG-3'. The protein is Homeobox-leucine zipper protein ATHB-5 (ATHB-5) of Arabidopsis thaliana (Mouse-ear cress).